The chain runs to 156 residues: Lipoprotein signal peptidase (156 aa).

4 helical membrane-spanning segments follow: residues 8-28 (IYIN…KWIL), 39-59 (VFFI…SILS), 67-87 (YFLL…MIKF), and 99-119 (SLIL…GFVI). Catalysis depends on residues aspartate 120 and aspartate 138. A helical transmembrane segment spans residues 129–149 (WHFATFNIADFSIFIGMIMII).

It belongs to the peptidase A8 family.

The protein localises to the cell inner membrane. The enzyme catalyses Release of signal peptides from bacterial membrane prolipoproteins. Hydrolyzes -Xaa-Yaa-Zaa-|-(S,diacylglyceryl)Cys-, in which Xaa is hydrophobic (preferably Leu), and Yaa (Ala or Ser) and Zaa (Gly or Ala) have small, neutral side chains.. It participates in protein modification; lipoprotein biosynthesis (signal peptide cleavage). Its function is as follows. This protein specifically catalyzes the removal of signal peptides from prolipoproteins. This Buchnera aphidicola subsp. Schizaphis graminum (strain Sg) protein is Lipoprotein signal peptidase.